A 249-amino-acid polypeptide reads, in one-letter code: 2,3-bisphosphoglycerate-dependent phosphoglycerate mutase (249 aa).

Substrate-binding positions include 8–15, 21–22, Arg-60, 87–90, Lys-98, 114–115, and 183–184; these read RHGESAWN, TG, ERHY, RR, and GN. His-9 functions as the Tele-phosphohistidine intermediate in the catalytic mechanism. Glu-87 functions as the Proton donor/acceptor in the catalytic mechanism.

This sequence belongs to the phosphoglycerate mutase family. BPG-dependent PGAM subfamily.

It catalyses the reaction (2R)-2-phosphoglycerate = (2R)-3-phosphoglycerate. It participates in carbohydrate degradation; glycolysis; pyruvate from D-glyceraldehyde 3-phosphate: step 3/5. Catalyzes the interconversion of 2-phosphoglycerate and 3-phosphoglycerate. This is 2,3-bisphosphoglycerate-dependent phosphoglycerate mutase from Methanosphaerula palustris (strain ATCC BAA-1556 / DSM 19958 / E1-9c).